Reading from the N-terminus, the 79-residue chain is ESX secretion system protein YukD (79 aa).

It belongs to the EsaB family.

Its function is as follows. Required for YukE secretion. Probable component or regulator of the ESX/ESAT-6-like secretion system (BsEss). This chain is ESX secretion system protein YukD (yukD), found in Bacillus subtilis (strain 168).